The primary structure comprises 584 residues: Arginine--tRNA ligase (584 aa).

Positions 126 to 136 (PNIAKEMHVGH) match the 'HIGH' region motif.

It belongs to the class-I aminoacyl-tRNA synthetase family. As to quaternary structure, monomer.

The protein resides in the cytoplasm. The enzyme catalyses tRNA(Arg) + L-arginine + ATP = L-arginyl-tRNA(Arg) + AMP + diphosphate. The polypeptide is Arginine--tRNA ligase (argS) (Synechocystis sp. (strain ATCC 27184 / PCC 6803 / Kazusa)).